We begin with the raw amino-acid sequence, 398 residues long: Secreted aspartic protease 2 (398 aa).

The signal sequence occupies residues 1 to 18; sequence MFLKNIFIALAIALLVDA. Positions 19–56 are cleaved as a propeptide — activation peptide; it reads TPTTTKRSAGFVALDFSVVKTPKAFPVTNGQEGKTSKR. Residues 70–384 form the Peptidase A1 domain; sequence YAADITVGSN…DLDDNEISLA (315 aa). The active site involves aspartate 88. 88–90 contributes to the pepstatin A binding site; it reads DTG. The cysteines at positions 103 and 115 are disulfide-linked. 141–142 is a binding site for pepstatin A; the sequence is GD. The Zn(2+) site is built by aspartate 247 and aspartate 270. Residue aspartate 274 is part of the active site. Residue 274–278 participates in pepstatin A binding; it reads DSGTT. Cysteine 312 and cysteine 350 are joined by a disulfide. N-linked (GlcNAc...) asparagine glycosylation is found at asparagine 313 and asparagine 321.

This sequence belongs to the peptidase A1 family. As to quaternary structure, monomer.

It is found in the secreted. The enzyme catalyses Preferential cleavage at the carboxyl of hydrophobic amino acids, but fails to cleave 15-Leu-|-Tyr-16, 16-Tyr-|-Leu-17 and 24-Phe-|-Phe-25 of insulin B chain. Activates trypsinogen, and degrades keratin.. Secreted aspartic peptidases (SAPs) are a group of ten acidic hydrolases considered as key virulence factors. These enzymes supply the fungus with nutrient amino acids as well as are able to degrade the selected host's proteins involved in the immune defense. Induces host inflammatory cytokine production in a proteolytic activity-independent way. Plays a role in tissue damage during superficial infection. Moreover, acts toward human hemoglobin though limited proteolysis to generate a variety of antimicrobial hemocidins, enabling to compete with the other microorganisms of the same physiological niche using the microbicidal peptides generated from the host protein. In terms of biological role, plays a key role in defense against host by cleaving histatin-5 (Hst 5), a peptide from human saliva that carries out fungicidal activity. The cleavage rate decreases in an order of SAP2 &gt; SAP9 &gt; SAP3 &gt; SAP7 &gt; SAP4 &gt; SAP1 &gt; SAP8. The first cleavage occurs between residues 'Lys-17' and 'His-18' of Hst 5, giving DSHAKRHHGYKRKFHEK and HHSHRGY peptides. Simultaneously, the DSHAKRHHGYKRK peptide is also formed. Further fragmentation by SAP2 results in FHEK and DSHAKRHHGY products. The protein is Secreted aspartic protease 2 of Candida albicans (strain SC5314 / ATCC MYA-2876) (Yeast).